We begin with the raw amino-acid sequence, 149 residues long: Nucleoside diphosphate kinase (149 aa).

Residues K9, F57, R85, T91, R102, and N112 each contribute to the ATP site. Catalysis depends on H115, which acts as the Pros-phosphohistidine intermediate.

The protein belongs to the NDK family. As to quaternary structure, homotetramer. It depends on Mg(2+) as a cofactor.

It localises to the cytoplasm. It catalyses the reaction a 2'-deoxyribonucleoside 5'-diphosphate + ATP = a 2'-deoxyribonucleoside 5'-triphosphate + ADP. The catalysed reaction is a ribonucleoside 5'-diphosphate + ATP = a ribonucleoside 5'-triphosphate + ADP. Its function is as follows. Major role in the synthesis of nucleoside triphosphates other than ATP. The ATP gamma phosphate is transferred to the NDP beta phosphate via a ping-pong mechanism, using a phosphorylated active-site intermediate. The polypeptide is Nucleoside diphosphate kinase (Gloeobacter violaceus (strain ATCC 29082 / PCC 7421)).